The primary structure comprises 188 residues: Xanthine phosphoribosyltransferase (188 aa).

Xanthine is bound by residues leucine 20 and asparagine 27. Alanine 127–alanine 131 serves as a coordination point for 5-phospho-alpha-D-ribose 1-diphosphate. Lysine 155 lines the xanthine pocket.

The protein belongs to the purine/pyrimidine phosphoribosyltransferase family. Xpt subfamily. In terms of assembly, homodimer.

The protein resides in the cytoplasm. The catalysed reaction is XMP + diphosphate = xanthine + 5-phospho-alpha-D-ribose 1-diphosphate. It functions in the pathway purine metabolism; XMP biosynthesis via salvage pathway; XMP from xanthine: step 1/1. In terms of biological role, converts the preformed base xanthine, a product of nucleic acid breakdown, to xanthosine 5'-monophosphate (XMP), so it can be reused for RNA or DNA synthesis. The polypeptide is Xanthine phosphoribosyltransferase (Parabacteroides distasonis (strain ATCC 8503 / DSM 20701 / CIP 104284 / JCM 5825 / NCTC 11152)).